A 546-amino-acid polypeptide reads, in one-letter code: CTP synthase (546 aa).

The segment at 1–265 (MTKYVFVTGG…DEIVCHKLNI (265 aa)) is amidoligase domain. CTP is bound at residue serine 13. Serine 13 provides a ligand contact to UTP. ATP contacts are provided by residues 14 to 19 (SLGKGI) and aspartate 71. 2 residues coordinate Mg(2+): aspartate 71 and glutamate 139. Residues 146–148 (DIE), 186–191 (KTKPTQ), and lysine 222 contribute to the CTP site. UTP-binding positions include 186–191 (KTKPTQ) and lysine 222. The 254-residue stretch at 290-543 (NIAFVGKYVD…VRAALAHQQK (254 aa)) folds into the Glutamine amidotransferase type-1 domain. Glycine 351 serves as a coordination point for L-glutamine. Residue cysteine 378 is the Nucleophile; for glutamine hydrolysis of the active site. L-glutamine contacts are provided by residues 379–382 (LGMQ), glutamate 402, and arginine 469. Residues histidine 516 and glutamate 518 contribute to the active site.

This sequence belongs to the CTP synthase family. In terms of assembly, homotetramer.

The enzyme catalyses UTP + L-glutamine + ATP + H2O = CTP + L-glutamate + ADP + phosphate + 2 H(+). It carries out the reaction L-glutamine + H2O = L-glutamate + NH4(+). It catalyses the reaction UTP + NH4(+) + ATP = CTP + ADP + phosphate + 2 H(+). It participates in pyrimidine metabolism; CTP biosynthesis via de novo pathway; CTP from UDP: step 2/2. Its activity is regulated as follows. Allosterically activated by GTP, when glutamine is the substrate; GTP has no effect on the reaction when ammonia is the substrate. The allosteric effector GTP functions by stabilizing the protein conformation that binds the tetrahedral intermediate(s) formed during glutamine hydrolysis. Inhibited by the product CTP, via allosteric rather than competitive inhibition. Its function is as follows. Catalyzes the ATP-dependent amination of UTP to CTP with either L-glutamine or ammonia as the source of nitrogen. Regulates intracellular CTP levels through interactions with the four ribonucleotide triphosphates. This Thiobacillus denitrificans (strain ATCC 25259 / T1) protein is CTP synthase.